The chain runs to 508 residues: Glycerol kinase (508 aa).

T14 contacts ADP. Positions 14, 15, and 16 each coordinate ATP. T14 contributes to the sn-glycerol 3-phosphate binding site. R18 contacts ADP. Residues R84, E85, Y134, and D247 each coordinate sn-glycerol 3-phosphate. Glycerol contacts are provided by R84, E85, Y134, D247, and Q248. ADP contacts are provided by T269 and G313. T269, G313, Q317, and G416 together coordinate ATP. ADP is bound at residue G416.

Belongs to the FGGY kinase family.

The enzyme catalyses glycerol + ATP = sn-glycerol 3-phosphate + ADP + H(+). The protein operates within polyol metabolism; glycerol degradation via glycerol kinase pathway; sn-glycerol 3-phosphate from glycerol: step 1/1. Its activity is regulated as follows. Inhibited by fructose 1,6-bisphosphate (FBP). Its function is as follows. Key enzyme in the regulation of glycerol uptake and metabolism. Catalyzes the phosphorylation of glycerol to yield sn-glycerol 3-phosphate. The sequence is that of Glycerol kinase from Mycoplasmoides gallisepticum (strain R(low / passage 15 / clone 2)) (Mycoplasma gallisepticum).